A 938-amino-acid chain; its full sequence is Isoleucine--tRNA ligase (938 aa).

Residues 58–68 (PYANGSIHIGH) carry the 'HIGH' region motif. N6-acetyllysine is present on K183. An L-isoleucyl-5'-AMP-binding site is contributed by E561. The short motif at 602–606 (KMSKS) is the 'KMSKS' region element. K605 is a binding site for ATP. The Zn(2+) site is built by C901, C904, C921, and C924.

It belongs to the class-I aminoacyl-tRNA synthetase family. IleS type 1 subfamily. In terms of assembly, monomer. It depends on Zn(2+) as a cofactor.

It localises to the cytoplasm. The enzyme catalyses tRNA(Ile) + L-isoleucine + ATP = L-isoleucyl-tRNA(Ile) + AMP + diphosphate. Its function is as follows. Catalyzes the attachment of isoleucine to tRNA(Ile). As IleRS can inadvertently accommodate and process structurally similar amino acids such as valine, to avoid such errors it has two additional distinct tRNA(Ile)-dependent editing activities. One activity is designated as 'pretransfer' editing and involves the hydrolysis of activated Val-AMP. The other activity is designated 'posttransfer' editing and involves deacylation of mischarged Val-tRNA(Ile). This Escherichia coli (strain 55989 / EAEC) protein is Isoleucine--tRNA ligase.